We begin with the raw amino-acid sequence, 110 residues long: Large ribosomal subunit protein uL22 (110 aa).

This sequence belongs to the universal ribosomal protein uL22 family. Part of the 50S ribosomal subunit.

In terms of biological role, this protein binds specifically to 23S rRNA; its binding is stimulated by other ribosomal proteins, e.g. L4, L17, and L20. It is important during the early stages of 50S assembly. It makes multiple contacts with different domains of the 23S rRNA in the assembled 50S subunit and ribosome. The globular domain of the protein is located near the polypeptide exit tunnel on the outside of the subunit, while an extended beta-hairpin is found that lines the wall of the exit tunnel in the center of the 70S ribosome. The sequence is that of Large ribosomal subunit protein uL22 from Shewanella baltica (strain OS223).